A 476-amino-acid polypeptide reads, in one-letter code: Bifunctional protein HldE (476 aa).

A ribokinase region spans residues 1-318 (MKPTLPNYDQ…AEAIHGSQDS (318 aa)). ATP is bound at residue 195–198 (NMLE). The active site involves D264. A cytidylyltransferase region spans residues 344–476 (MTNGCFDILH…IIEAIKGGRG (133 aa)).

It in the N-terminal section; belongs to the carbohydrate kinase PfkB family. The protein in the C-terminal section; belongs to the cytidylyltransferase family. In terms of assembly, homodimer.

It catalyses the reaction D-glycero-beta-D-manno-heptose 7-phosphate + ATP = D-glycero-beta-D-manno-heptose 1,7-bisphosphate + ADP + H(+). The enzyme catalyses D-glycero-beta-D-manno-heptose 1-phosphate + ATP + H(+) = ADP-D-glycero-beta-D-manno-heptose + diphosphate. It functions in the pathway nucleotide-sugar biosynthesis; ADP-L-glycero-beta-D-manno-heptose biosynthesis; ADP-L-glycero-beta-D-manno-heptose from D-glycero-beta-D-manno-heptose 7-phosphate: step 1/4. The protein operates within nucleotide-sugar biosynthesis; ADP-L-glycero-beta-D-manno-heptose biosynthesis; ADP-L-glycero-beta-D-manno-heptose from D-glycero-beta-D-manno-heptose 7-phosphate: step 3/4. In terms of biological role, catalyzes the phosphorylation of D-glycero-D-manno-heptose 7-phosphate at the C-1 position to selectively form D-glycero-beta-D-manno-heptose-1,7-bisphosphate. Its function is as follows. Catalyzes the ADP transfer from ATP to D-glycero-beta-D-manno-heptose 1-phosphate, yielding ADP-D-glycero-beta-D-manno-heptose. The protein is Bifunctional protein HldE of Aliivibrio salmonicida (strain LFI1238) (Vibrio salmonicida (strain LFI1238)).